A 376-amino-acid chain; its full sequence is UPF0754 membrane protein BH1148 (376 aa).

Transmembrane regions (helical) follow at residues 3-23 (LILF…SLAI) and 355-375 (YLGA…ILLI).

It belongs to the UPF0754 family.

The protein localises to the cell membrane. The chain is UPF0754 membrane protein BH1148 from Halalkalibacterium halodurans (strain ATCC BAA-125 / DSM 18197 / FERM 7344 / JCM 9153 / C-125) (Bacillus halodurans).